We begin with the raw amino-acid sequence, 572 residues long: Arginine--tRNA ligase (572 aa).

The 'HIGH' region signature appears at 122–132; the sequence is PNLAKEMHVGH.

The protein belongs to the class-I aminoacyl-tRNA synthetase family. As to quaternary structure, monomer.

The protein localises to the cytoplasm. The catalysed reaction is tRNA(Arg) + L-arginine + ATP = L-arginyl-tRNA(Arg) + AMP + diphosphate. This is Arginine--tRNA ligase from Neisseria gonorrhoeae (strain ATCC 700825 / FA 1090).